Consider the following 136-residue polypeptide: uncharacterized protein (136 aa).

As to expression, widely expressed.

This is an uncharacterized protein from Homo sapiens (Human).